The following is a 329-amino-acid chain: Acetyl-coenzyme A carboxylase carboxyl transferase subunit alpha (329 aa).

Residues glutamine 40–glutamate 294 form the CoA carboxyltransferase C-terminal domain.

The protein belongs to the AccA family. Acetyl-CoA carboxylase is a heterohexamer composed of biotin carboxyl carrier protein (AccB), biotin carboxylase (AccC) and two subunits each of ACCase subunit alpha (AccA) and ACCase subunit beta (AccD).

It is found in the cytoplasm. It carries out the reaction N(6)-carboxybiotinyl-L-lysyl-[protein] + acetyl-CoA = N(6)-biotinyl-L-lysyl-[protein] + malonyl-CoA. Its pathway is lipid metabolism; malonyl-CoA biosynthesis; malonyl-CoA from acetyl-CoA: step 1/1. Component of the acetyl coenzyme A carboxylase (ACC) complex. First, biotin carboxylase catalyzes the carboxylation of biotin on its carrier protein (BCCP) and then the CO(2) group is transferred by the carboxyltransferase to acetyl-CoA to form malonyl-CoA. This chain is Acetyl-coenzyme A carboxylase carboxyl transferase subunit alpha, found in Prochlorococcus marinus (strain MIT 9211).